Reading from the N-terminus, the 509-residue chain is Protein root UVB sensitive 5 (509 aa).

Positions 22–49 are disordered; it reads CQPKRRRVEHLRCSAQPSSIREDDEDAD.

This sequence belongs to the RUS1 family.

The polypeptide is Protein root UVB sensitive 5 (Arabidopsis thaliana (Mouse-ear cress)).